The primary structure comprises 700 residues: Serine/threonine-protein kinase WNK1 (700 aa).

Residues 24-281 form the Protein kinase domain; the sequence is GRYNEVLGKG…ARELLDDPFL (258 aa). Residues 104–107 and K154 each bind ATP; that span reads TELF. D171 serves as the catalytic Proton acceptor. The segment covering 314 to 339 has biased composition (low complexity); it reads NYPSNSSSLNRQYSNGNYPSNSSSLN. 3 disordered regions span residues 314–345, 551–575, and 647–666; these read NYPS…YSNG, ESRE…EVLY, and ESGE…SVSG. The span at 551 to 565 shows a compositional bias: basic and acidic residues; sequence ESRELSSIDSGHNHS. The segment covering 566–575 has biased composition (acidic residues); sequence EEEEEEEVLY.

It belongs to the protein kinase superfamily. Ser/Thr protein kinase family. WNK subfamily. Post-translationally, autophosphorylated.

The enzyme catalyses L-seryl-[protein] + ATP = O-phospho-L-seryl-[protein] + ADP + H(+). It catalyses the reaction L-threonyl-[protein] + ATP = O-phospho-L-threonyl-[protein] + ADP + H(+). Regulates flowering time by modulating the photoperiod pathway. Phosphorylates APRR3. In Arabidopsis thaliana (Mouse-ear cress), this protein is Serine/threonine-protein kinase WNK1 (WNK1).